A 355-amino-acid chain; its full sequence is uncharacterized protein (355 aa).

The active-site For GATase activity is the Cys2. Residues 2 to 248 (CELLGICFNK…NGELMVFKNG (247 aa)) enclose the Glutamine amidotransferase type-2 domain.

This is an uncharacterized protein from Methanocaldococcus jannaschii (strain ATCC 43067 / DSM 2661 / JAL-1 / JCM 10045 / NBRC 100440) (Methanococcus jannaschii).